A 369-amino-acid chain; its full sequence is Biglycan (369 aa).

The first 16 residues, 1–16, serve as a signal peptide directing secretion; the sequence is MCPLWLLAALLALSQA. The propeptide occupies 17-37; it reads LPFEQKAFWDFTLDDGLPMLN. O-linked (Xyl...) (glycosaminoglycan) serine glycosylation is found at S42 and S48. Cystine bridges form between C64–C70 and C68–C77. 12 LRR repeats span residues 83–103, 104–127, 128–151, 152–172, 173–196, 197–221, 222–242, 243–266, 267–290, 291–313, 314–343, and 344–369; these read KAVP…NNDI, SELR…NNKI, SKIH…KNHL, VEIP…DNRI, RKVP…GNPL, ENSG…EAKL, TGIP…HNKI, QAIE…HNQI, RMIE…NNKL, SRVP…TNNI, TKVG…NNPV, and PYWE…NYKK. 2 N-linked (GlcNAc...) asparagine glycosylation sites follow: N271 and N312. C322 and C355 are oxidised to a cystine.

This sequence belongs to the small leucine-rich proteoglycan (SLRP) family. SLRP class I subfamily. In terms of assembly, homodimer. Forms a ternary complex with MFAP2 and ELN. In terms of processing, the two attached glycosaminoglycan chains can be either chondroitin sulfate or dermatan sulfate. In terms of tissue distribution, found in several connective tissues, especially in articular cartilages.

It is found in the secreted. The protein localises to the extracellular space. It localises to the extracellular matrix. Functionally, may be involved in collagen fiber assembly. The chain is Biglycan (BGN) from Ovis aries (Sheep).